We begin with the raw amino-acid sequence, 509 residues long: Glycogen synthase (509 aa).

An ADP-alpha-D-glucose-binding site is contributed by lysine 47.

It belongs to the glycosyltransferase 1 family. Bacterial/plant glycogen synthase subfamily.

It catalyses the reaction [(1-&gt;4)-alpha-D-glucosyl](n) + ADP-alpha-D-glucose = [(1-&gt;4)-alpha-D-glucosyl](n+1) + ADP + H(+). It functions in the pathway glycan biosynthesis; glycogen biosynthesis. Synthesizes alpha-1,4-glucan chains using ADP-glucose. This Xanthomonas oryzae pv. oryzae (strain PXO99A) protein is Glycogen synthase.